Reading from the N-terminus, the 299-residue chain is Ribonuclease Z (299 aa).

Zn(2+) is bound by residues His-60, His-62, Asp-64, His-65, His-137, Asp-207, and His-265. The Proton acceptor role is filled by Asp-64.

Belongs to the RNase Z family. As to quaternary structure, homodimer. It depends on Zn(2+) as a cofactor.

The enzyme catalyses Endonucleolytic cleavage of RNA, removing extra 3' nucleotides from tRNA precursor, generating 3' termini of tRNAs. A 3'-hydroxy group is left at the tRNA terminus and a 5'-phosphoryl group is left at the trailer molecule.. Functionally, zinc phosphodiesterase, which displays some tRNA 3'-processing endonuclease activity. Probably involved in tRNA maturation, by removing a 3'-trailer from precursor tRNA. The sequence is that of Ribonuclease Z from Nitrosopumilus maritimus (strain SCM1).